The sequence spans 37 residues: Large ribosomal subunit protein bL36c (37 aa).

Belongs to the bacterial ribosomal protein bL36 family.

It is found in the plastid. The protein localises to the chloroplast. The polypeptide is Large ribosomal subunit protein bL36c (Chloranthus spicatus (Chulantree)).